The primary structure comprises 583 residues: Isocitrate dehydrogenase kinase/phosphatase (583 aa).

Residues 315–321 (APGIRGM) and lysine 336 contribute to the ATP site. Aspartate 371 is a catalytic residue.

Belongs to the AceK family.

It is found in the cytoplasm. The catalysed reaction is L-seryl-[isocitrate dehydrogenase] + ATP = O-phospho-L-seryl-[isocitrate dehydrogenase] + ADP + H(+). Functionally, bifunctional enzyme which can phosphorylate or dephosphorylate isocitrate dehydrogenase (IDH) on a specific serine residue. This is a regulatory mechanism which enables bacteria to bypass the Krebs cycle via the glyoxylate shunt in response to the source of carbon. When bacteria are grown on glucose, IDH is fully active and unphosphorylated, but when grown on acetate or ethanol, the activity of IDH declines drastically concomitant with its phosphorylation. This Salmonella gallinarum (strain 287/91 / NCTC 13346) protein is Isocitrate dehydrogenase kinase/phosphatase.